A 513-amino-acid chain; its full sequence is MTTSKIGVRHAGHGHTVNIKYGYIIFGVSVLYALLLASAHFLELRQWRRQKRPSRSSVWARINNAPFWVHTLLWAAIVVGLAFTNVHDLSQNWTVVVKRLGRLAFCLVPLDLALALRPCLLGQSYLELMPLHKWLSRLIILAGVVHGIGFFVKWTIHHQLGKAKRWANLAGIIVALFSVLLVIVSSRPVRRRFYSYFYAFHNFTVALFVLLMIWHARPGVSDFVLLSVALLLFQGASRVYNGYSVPGLTIVDADAASLRLLRLQKPNSFPSVWQPGSHIRVGLPLSSWQSWVFPAHLYTLCSSPANDTLNLVVKKGRRFEMLTSLEYRVSCPYASLPTPWLSTAENVHIVCGGSGISLGIPLYEYFDNKSSVLANLHWCVSNARDTFVLSELGVNNPVNVYVTSGKIDQSSYDDADNEDAGLLGAGDNIELEPIPAENKSNPFTDDHAVNCAEQRIQMHAGRPNLSEILASFSETDDNAHKLLIVCGPVGLIRDVRAYGDAHGIAVFSELYNM.

7 helical membrane-spanning segments follow: residues 22–42 (GYII…AHFL), 66–86 (PFWV…FTNV), 103–123 (LAFC…LLGQ), 138–158 (LIIL…TIHH), 166–186 (WANL…IVSS), 193–213 (FYSY…LLMI), and 219–239 (GVSD…ASRV). Residues 100–211 (LGRLAFCLVP…NFTVALFVLL (112 aa)) enclose the Ferric oxidoreductase domain. The region spanning 240–368 (YNGYSVPGLT…GIPLYEYFDN (129 aa)) is the FAD-binding FR-type domain.

It belongs to the ferric reductase (FRE) family. AIM14 subfamily.

Its subcellular location is the membrane. Functionally, probable cell surface metalloreductase. May be involved in iron or copper homeostasis. The protein is Probable metalloreductase AIM14 (AIM14) of Clavispora lusitaniae (strain ATCC 42720) (Yeast).